A 581-amino-acid chain; its full sequence is Phosphatidylinositol N-acetylglucosaminyltransferase subunit Q (581 aa).

5 helical membrane-spanning segments follow: residues 276 to 298, 344 to 366, 381 to 403, 446 to 468, and 478 to 500; these read ANML…WLHS, LGRF…SPFI, LTVA…YCFY, LFIG…LYYL, and ITVQ…YSLG.

It belongs to the PIGQ family. Component of the glycosylphosphatidylinositol-N-acetylglucosaminyltransferase (GPI-GnT) complex composed at least by PIGA, PIGC, PIGH, PIGP, PIGQ, PIGY and DPM2. Interacts with PIGA, PIGH and PIGC.

It is found in the membrane. It functions in the pathway glycolipid biosynthesis; glycosylphosphatidylinositol-anchor biosynthesis. Part of the glycosylphosphatidylinositol-N-acetylglucosaminyltransferase (GPI-GnT) complex that catalyzes the transfer of N-acetylglucosamine from UDP-N-acetylglucosamine to phosphatidylinositol and participates in the first step of GPI biosynthesis. The sequence is that of Phosphatidylinositol N-acetylglucosaminyltransferase subunit Q from Mus musculus (Mouse).